A 357-amino-acid chain; its full sequence is tRNA/tmRNA (uracil-C(5))-methyltransferase (357 aa).

S-adenosyl-L-methionine-binding residues include glutamine 180, tyrosine 209, asparagine 214, glutamate 230, and aspartate 290. Cysteine 315 (nucleophile) is an active-site residue. Glutamate 349 acts as the Proton acceptor in catalysis.

Belongs to the class I-like SAM-binding methyltransferase superfamily. RNA M5U methyltransferase family. TrmA subfamily.

It carries out the reaction uridine(54) in tRNA + S-adenosyl-L-methionine = 5-methyluridine(54) in tRNA + S-adenosyl-L-homocysteine + H(+). The catalysed reaction is uridine(341) in tmRNA + S-adenosyl-L-methionine = 5-methyluridine(341) in tmRNA + S-adenosyl-L-homocysteine + H(+). Dual-specificity methyltransferase that catalyzes the formation of 5-methyluridine at position 54 (m5U54) in all tRNAs, and that of position 341 (m5U341) in tmRNA (transfer-mRNA). The chain is tRNA/tmRNA (uracil-C(5))-methyltransferase from Campylobacter jejuni subsp. jejuni serotype O:2 (strain ATCC 700819 / NCTC 11168).